Here is a 720-residue protein sequence, read N- to C-terminus: Methionine--tRNA ligase (720 aa).

Residues 27 to 37 (PYANGQIHIGH) carry the 'HIGH' region motif. The Zn(2+) site is built by Cys-158, Cys-161, Cys-171, and Cys-174. The 'KMSKS' region signature appears at 348–352 (KMSKS). Residue Lys-351 coordinates ATP. A tRNA-binding domain is found at 614–720 (DFAKVDLRIA…SGAKPGMRVK (107 aa)).

It belongs to the class-I aminoacyl-tRNA synthetase family. MetG type 1 subfamily. Homodimer. Zn(2+) is required as a cofactor.

The protein localises to the cytoplasm. It catalyses the reaction tRNA(Met) + L-methionine + ATP = L-methionyl-tRNA(Met) + AMP + diphosphate. In terms of biological role, is required not only for elongation of protein synthesis but also for the initiation of all mRNA translation through initiator tRNA(fMet) aminoacylation. The chain is Methionine--tRNA ligase from Burkholderia ambifaria (strain MC40-6).